A 402-amino-acid polypeptide reads, in one-letter code: F-box/kelch-repeat protein At4g39590 (402 aa).

Positions 1–14 (MFPMSSTSRSSAAN) are enriched in low complexity. The tract at residues 1–37 (MFPMSSTSRSSAANNRKDPPRKKNKETPSPVTREPTS) is disordered. The segment covering 27–37 (TPSPVTREPTS) has biased composition (polar residues). Residues 35–81 (PTSIDSLPNDLLLNCFARVSRMYYPALSRVSKRFRSIVTSPEIYNTR) enclose the F-box domain. Kelch repeat units lie at residues 143–198 (NIYR…VVDG), 199–246 (KIYV…YRRA), 255–300 (KLYL…LFYW), and 302–341 (QGVF…DLGG).

This is F-box/kelch-repeat protein At4g39590 from Arabidopsis thaliana (Mouse-ear cress).